A 336-amino-acid polypeptide reads, in one-letter code: uncharacterized protein (336 aa).

Belongs to the GppA/Ppx family.

This is an uncharacterized protein from Streptomyces coelicolor (strain ATCC BAA-471 / A3(2) / M145).